The following is a 230-amino-acid chain: 3-isopropylmalate dehydratase small subunit (230 aa).

It belongs to the LeuD family. LeuD type 1 subfamily. Heterodimer of LeuC and LeuD.

The enzyme catalyses (2R,3S)-3-isopropylmalate = (2S)-2-isopropylmalate. The protein operates within amino-acid biosynthesis; L-leucine biosynthesis; L-leucine from 3-methyl-2-oxobutanoate: step 2/4. Its function is as follows. Catalyzes the isomerization between 2-isopropylmalate and 3-isopropylmalate, via the formation of 2-isopropylmaleate. This chain is 3-isopropylmalate dehydratase small subunit, found in Bifidobacterium longum (strain DJO10A).